The chain runs to 185 residues: MSDTADSLSARGIPKSELIEDVESWLTKEKLSIEEAEVVLREKYGKYKYVESSMLAQKVRMSEKIPEFENSLSIIDTLIAKRAADESFETTFLLSDDVYTKATVQKPEKVSIWLGANVMVEYDLENARKLLDKNRGSVQKVVDELTNELSYIKDQITTTEVNMSHIVNFGVNKRRAALAVNNGAK.

The protein belongs to the prefoldin subunit alpha family. As to quaternary structure, heterohexamer of two PFD-alpha type and four PFD-beta type subunits.

Its function is as follows. Binds specifically to cytosolic chaperonin (c-CPN) and transfers target proteins to it. Binds to nascent polypeptide chain and promotes folding in an environment in which there are many competing pathways for nonnative proteins. The chain is Probable prefoldin subunit 3 (pfd-3) from Caenorhabditis elegans.